The sequence spans 310 residues: Putative S-adenosyl-L-methionine-dependent methyltransferase Mb0151 (310 aa).

S-adenosyl-L-methionine is bound by residues D132 and 161-162 (DL).

The protein belongs to the UPF0677 family.

Functionally, exhibits S-adenosyl-L-methionine-dependent methyltransferase activity. This Mycobacterium bovis (strain ATCC BAA-935 / AF2122/97) protein is Putative S-adenosyl-L-methionine-dependent methyltransferase Mb0151.